We begin with the raw amino-acid sequence, 549 residues long: Probable protein kinase UbiB (549 aa).

The region spanning 123–501 (DFDETPLASA…QQQAHKSNYM (379 aa)) is the Protein kinase domain. Residues 129 to 137 (LASASISQV) and lysine 152 contribute to the ATP site. The active-site Proton acceptor is the aspartate 287. The next 2 helical transmembrane spans lie at 499-516 (NYML…TLLF) and 521-540 (TLWS…FIGW).

Belongs to the ABC1 family. UbiB subfamily.

Its subcellular location is the cell inner membrane. The protein operates within cofactor biosynthesis; ubiquinone biosynthesis [regulation]. Functionally, is probably a protein kinase regulator of UbiI activity which is involved in aerobic coenzyme Q (ubiquinone) biosynthesis. The sequence is that of Probable protein kinase UbiB from Shewanella sp. (strain W3-18-1).